Consider the following 191-residue polypeptide: uncharacterized protein (191 aa).

2 disordered regions span residues 1-42 (MSEE…DADA) and 145-191 (QNQE…IDLD). Basic and acidic residues-rich tracts occupy residues 11–26 (PRPD…RATG) and 147–178 (QERR…RDEG).

It may form a heterotetramer of two glucokinase subunits (glk) with two ORF2 proteins.

Functionally, may be involved in glucose transport or metabolism. This is an uncharacterized protein from Streptomyces coelicolor (strain ATCC BAA-471 / A3(2) / M145).